The chain runs to 403 residues: Homoserine O-succinyltransferase (403 aa).

Positions 1–31 (MTELQVDPAASADPAAAADTPRHPAATLPPD) are disordered. A compositionally biased stretch (low complexity) spans 7 to 26 (DPAASADPAAAADTPRHPAA). Positions 74–383 (NAVLICHALN…HGHDAFLLED (310 aa)) constitute an AB hydrolase-1 domain. Ser-178 acts as the Nucleophile in catalysis. Arg-248 lines the substrate pocket. Catalysis depends on residues Asp-343 and His-376. Asp-377 contributes to the substrate binding site.

Belongs to the AB hydrolase superfamily. MetX family. Homodimer.

The protein resides in the cytoplasm. It catalyses the reaction L-homoserine + succinyl-CoA = O-succinyl-L-homoserine + CoA. The protein operates within amino-acid biosynthesis; L-methionine biosynthesis via de novo pathway; O-succinyl-L-homoserine from L-homoserine: step 1/1. Its function is as follows. Transfers a succinyl group from succinyl-CoA to L-homoserine, forming succinyl-L-homoserine. The protein is Homoserine O-succinyltransferase of Ralstonia nicotianae (strain ATCC BAA-1114 / GMI1000) (Ralstonia solanacearum).